A 195-amino-acid chain; its full sequence is Putative NADH dehydrogenase/NAD(P)H nitroreductase Bcep18194_B1060 (195 aa).

The protein belongs to the nitroreductase family. HadB/RutE subfamily. The cofactor is FMN.

The protein is Putative NADH dehydrogenase/NAD(P)H nitroreductase Bcep18194_B1060 of Burkholderia lata (strain ATCC 17760 / DSM 23089 / LMG 22485 / NCIMB 9086 / R18194 / 383).